The following is a 144-amino-acid chain: MVRERTKKLRGGHYGRGFKAGRGKGKKGGSGNAGMGKHKWIWMVKYDPLHFGGKGFTSHHISQVEVPINLGDVEYMYESLKRDGFVREENGEIIVDLRAAGYDKLLGNGNFTVKSTIIIDKATEKAISKLSAIGSKIENDGSSA.

Positions 1 to 13 are enriched in basic residues; sequence MVRERTKKLRGGH. A disordered region spans residues 1–32; the sequence is MVRERTKKLRGGHYGRGFKAGRGKGKKGGSGN.

It belongs to the universal ribosomal protein uL15 family. Part of the 50S ribosomal subunit.

Its function is as follows. Binds to the 23S rRNA. The chain is Large ribosomal subunit protein uL15 from Thermoplasma acidophilum (strain ATCC 25905 / DSM 1728 / JCM 9062 / NBRC 15155 / AMRC-C165).